A 374-amino-acid polypeptide reads, in one-letter code: Translocating chain-associated membrane protein 1 (374 aa).

At 1 to 29 (MAIRKKSTKSPPVLSHEFVLQNHADIVSC) the chain is on the cytoplasmic side. Residues 30–50 (VAMVFLLGLMFEITAKASIIF) form a helical membrane-spanning segment. Topologically, residues 51–76 (VTLQYNVTLPATEEQATESASLYYYG) are lumenal. N-linked (GlcNAc...) asparagine glycosylation is present at Asn56. A helical membrane pass occupies residues 77–97 (IKDLATVFFYMLVAIIIHAVI). At 98–121 (QEYMLDKINRRMHFSKTKHSKFNE) the chain is on the cytoplasmic side. The TLC domain maps to 117–326 (SKFNESGQLS…NFQLRRWREH (210 aa)). The helical transmembrane segment at 122-142 (SGQLSAFYLFACVWGTFILIS) threads the bilayer. At 143-159 (ENYISDPTILWRAYPHN) the chain is on the lumenal side. The helical transmembrane segment at 160–180 (LMTFQMKFFYISQLAYWLHAF) threads the bilayer. Topologically, residues 181–192 (PELYFQKTKRED) are cytoplasmic. The helical transmembrane segment at 193-213 (IPRQLVYIGLYLFHIAGAYLL) threads the bilayer. Position 214 (Asn214) is a topological domain, lumenal. Residues 215 to 235 (LNHLGLVLLVLHYFVEFLFHI) traverse the membrane as a helical segment. The Cytoplasmic segment spans residues 236-251 (SRLFYFSNEKYQKGFS). A helical transmembrane segment spans residues 252 to 272 (LWAVLFVLGRLLTLILSVLTV). Topologically, residues 273–297 (GFGLARAENQKLDFSTGNFNVLAVR) are lumenal. Residues 298–318 (IAVLASICITQAFMVWKFINF) traverse the membrane as a helical segment. At 319 to 374 (QLRRWREHSAFQAPAVKKKPTVTKGRSSKKGTENGVNGTLTSNVADSPRNKKEKSS) the chain is on the cytoplasmic side. Over residues 334–347 (VKKKPTVTKGRSSK) the composition is skewed to basic residues. The disordered stretch occupies residues 334 to 374 (VKKKPTVTKGRSSKKGTENGVNGTLTSNVADSPRNKKEKSS). Over residues 352 to 363 (NGVNGTLTSNVA) the composition is skewed to polar residues. Phosphoserine is present on Ser365.

It belongs to the TRAM family. Interacts with SEC61B. May interact with Derlin-1/DERL1. Post-translationally, N-glycosylated.

It localises to the endoplasmic reticulum membrane. Functionally, involved in the translocation of nascent protein chains into or through the endoplasmic reticulum (ER) membrane by facilitating the proper chain positioning at the SEC61 channel. Regulates the exposure of nascent secretory protein chain to the cytosol during translocation into the ER. May affect the phospholipid bilayer in the vicinity of the lateral gate of the SEC61 channel, thereby facilitating ER protein transport. Intimately associates with transmembrane (TM) domain of nascent membrane proteins during the entire integration process into the ER membrane. Associates with the second TM domain of G-protein-coupled receptor opsin/OPSD nascent chain in the ER membrane, which may facilitate its integration into the membrane. Under conditions of ER stress, participates in the disposal of misfolded ER membrane proteins during the unfolded protein response (UPR), an integrated stress response (ISR) pathway, by selectively retrotranslocating misfolded ER-membrane proteins from the ER into the cytosol where they are ubiquitinated and degraded by the proteasome. The protein is Translocating chain-associated membrane protein 1 (TRAM1) of Pongo abelii (Sumatran orangutan).